The primary structure comprises 259 residues: Putative carbamate hydrolase RutD (259 aa).

The protein belongs to the AB hydrolase superfamily. Hydrolase RutD family.

It catalyses the reaction carbamate + 2 H(+) = NH4(+) + CO2. Involved in pyrimidine catabolism. May facilitate the hydrolysis of carbamate, a reaction that can also occur spontaneously. In Pseudomonas syringae pv. syringae (strain B728a), this protein is Putative carbamate hydrolase RutD.